We begin with the raw amino-acid sequence, 265 residues long: Expansin-like A1 (265 aa).

The first 20 residues, 1–20 (MGSFLFLIVVIFLFSSSVNA), serve as a signal peptide directing secretion. An Expansin-like EG45 domain is found at 41 to 147 (SGACAYGSMA…QRVPCDYGNK (107 aa)). Residues 42-62 (GACAYGSMATSFFAGHIAAAI) traverse the membrane as a helical segment. 2 N-linked (GlcNAc...) asparagine glycosylation sites follow: Asn-99 and Asn-102. Positions 161–244 (NYLEIKLLYQ…NWEAGKIYDA (84 aa)) constitute an Expansin-like CBD domain.

Belongs to the expansin family. Expansin-like A subfamily.

It is found in the membrane. The sequence is that of Expansin-like A1 (EXLA1) from Arabidopsis thaliana (Mouse-ear cress).